The following is a 287-amino-acid chain: Complement C1q-like protein 2 (287 aa).

The signal sequence occupies residues 1 to 21; that stretch reads MALGLLIAVPLLLQAAPPGAA. The disordered stretch occupies residues 65–144; sequence LSANPPPPFI…GTGGGGDTEG (80 aa). Residues 76-118 enclose the Collagen-like domain; the sequence is GPKGDPGRPGKPGPRGPPGEPGPPGPRGPPGEKGDSGRPGLPG. The segment covering 84–104 has biased composition (pro residues); that stretch reads PGKPGPRGPPGEPGPPGPRGP. Residues 127–141 show a composition bias toward gly residues; that stretch reads GGVGVVSGGTGGGGD. Positions 154 to 287 constitute a C1q domain; it reads FSGPKIAFYV…TFSGFLLYPD (134 aa).

As to quaternary structure, forms homotrimers which can further assemble to form higher-order oligomeric complexes. Interacts with ADGRB3. May interact with ERFE. Forms heterooligomers with C1QL3 and C1QL4, when proteins are coexpressed; this interaction does not occur after secretion. Post-translationally, glycosylated, but not with N-linked glycans. Highest expression in eye, followed by placenta and brain, intermediate expression in adipose tissue and lowest expression in lymph node and testis.

Its subcellular location is the secreted. Its function is as follows. May regulate the number of excitatory synapses that are formed on hippocampus neurons. Has no effect on inhibitory synapses. This chain is Complement C1q-like protein 2 (C1ql2), found in Mus musculus (Mouse).